A 447-amino-acid polypeptide reads, in one-letter code: Beclin-1 (447 aa).

Residues 105-124 (TMENLSRRLKVTSNLFDIMS) carry the BH3 motif. Residues 109 to 156 (LSRRLKVTSNLFDIMSGQTDIDHPLCEECTDTLLDHLDTQLNITENEC) form an interaction with BCL2 and BCL2L1 isoform Bcl-X(L) region. Residues 140-214 (TLLDHLDTQL…VAKELDEGRN (75 aa)) adopt a coiled-coil conformation. Positions 242–447 (DDLKSVDNQM…AWVSSQFYNR (206 aa)) are evolutionary conserved domain (ECD). Lys399 participates in a covalent cross-link: Glycyl lysine isopeptide (Lys-Gly) (interchain with G-Cter in ubiquitin). Residues 422 to 447 (WTKALKFMLTNLKWGLAWVSSQFYNR) are required for membrane-association.

Belongs to the beclin family. In terms of assembly, component of the PI3K (PI3KC3/PI3K-III/class III phosphatidylinositol 3-kinase) complex. Interacts with the poly-Gln domain of ATXN3; the interaction causes deubiquitination at Lys-399 and stabilizes BECN1. Post-translationally, polyubiquitinated at Lys-399 with 'Lys-48'-linkages. 'Lys-48'-linked polyubiquitination of Lys-399 leads to degradation. Deubiquitinated by ATXN3, leading to stabilization.

The protein resides in the cytoplasm. It is found in the golgi apparatus. The protein localises to the trans-Golgi network membrane. It localises to the endosome membrane. Its subcellular location is the endoplasmic reticulum membrane. The protein resides in the mitochondrion membrane. It is found in the endosome. The protein localises to the cytoplasmic vesicle. It localises to the autophagosome. Functionally, plays a central role in autophagy. Acts as a core subunit of different PI3K complex forms that mediate formation of phosphatidylinositol 3-phosphate and are believed to play a role in multiple membrane trafficking pathways: PI3KC3-C1 is involved in initiation of autophagosomes and PI3KC3-C2 in maturation of autophagosomes and endocytosis. Involved in regulation of degradative endocytic trafficking and required for the abscission step in cytokinesis, probably in the context of PI3KC3-C2. Essential for the formation of PI3KC3-C2 but not PI3KC3-C1 PI3K complex forms. Involved in endocytosis including endosome formation in neuronal cells. In Danio rerio (Zebrafish), this protein is Beclin-1 (becn1).